The sequence spans 105 residues: Large ribosomal subunit protein uL24 (105 aa).

The protein belongs to the universal ribosomal protein uL24 family. In terms of assembly, part of the 50S ribosomal subunit.

Its function is as follows. One of two assembly initiator proteins, it binds directly to the 5'-end of the 23S rRNA, where it nucleates assembly of the 50S subunit. In terms of biological role, one of the proteins that surrounds the polypeptide exit tunnel on the outside of the subunit. The protein is Large ribosomal subunit protein uL24 of Beijerinckia indica subsp. indica (strain ATCC 9039 / DSM 1715 / NCIMB 8712).